A 617-amino-acid polypeptide reads, in one-letter code: Dihydroxy-acid dehydratase (617 aa).

Position 82 (Asp82) interacts with Mg(2+). Cys123 contacts [2Fe-2S] cluster. Mg(2+) contacts are provided by Asp124 and Lys125. Lys125 is subject to N6-carboxylysine. Cys197 contributes to the [2Fe-2S] cluster binding site. A Mg(2+)-binding site is contributed by Glu497. Ser523 serves as the catalytic Proton acceptor.

The protein belongs to the IlvD/Edd family. In terms of assembly, homodimer. It depends on [2Fe-2S] cluster as a cofactor. The cofactor is Mg(2+).

The catalysed reaction is (2R)-2,3-dihydroxy-3-methylbutanoate = 3-methyl-2-oxobutanoate + H2O. The enzyme catalyses (2R,3R)-2,3-dihydroxy-3-methylpentanoate = (S)-3-methyl-2-oxopentanoate + H2O. Its pathway is amino-acid biosynthesis; L-isoleucine biosynthesis; L-isoleucine from 2-oxobutanoate: step 3/4. The protein operates within amino-acid biosynthesis; L-valine biosynthesis; L-valine from pyruvate: step 3/4. Functionally, functions in the biosynthesis of branched-chain amino acids. Catalyzes the dehydration of (2R,3R)-2,3-dihydroxy-3-methylpentanoate (2,3-dihydroxy-3-methylvalerate) into 2-oxo-3-methylpentanoate (2-oxo-3-methylvalerate) and of (2R)-2,3-dihydroxy-3-methylbutanoate (2,3-dihydroxyisovalerate) into 2-oxo-3-methylbutanoate (2-oxoisovalerate), the penultimate precursor to L-isoleucine and L-valine, respectively. The sequence is that of Dihydroxy-acid dehydratase from Streptomyces avermitilis (strain ATCC 31267 / DSM 46492 / JCM 5070 / NBRC 14893 / NCIMB 12804 / NRRL 8165 / MA-4680).